A 223-amino-acid chain; its full sequence is ATP phosphoribosyltransferase (223 aa).

This sequence belongs to the ATP phosphoribosyltransferase family. Short subfamily. In terms of assembly, heteromultimer composed of HisG and HisZ subunits.

It is found in the cytoplasm. The catalysed reaction is 1-(5-phospho-beta-D-ribosyl)-ATP + diphosphate = 5-phospho-alpha-D-ribose 1-diphosphate + ATP. Its pathway is amino-acid biosynthesis; L-histidine biosynthesis; L-histidine from 5-phospho-alpha-D-ribose 1-diphosphate: step 1/9. Catalyzes the condensation of ATP and 5-phosphoribose 1-diphosphate to form N'-(5'-phosphoribosyl)-ATP (PR-ATP). Has a crucial role in the pathway because the rate of histidine biosynthesis seems to be controlled primarily by regulation of HisG enzymatic activity. The polypeptide is ATP phosphoribosyltransferase (Novosphingobium aromaticivorans (strain ATCC 700278 / DSM 12444 / CCUG 56034 / CIP 105152 / NBRC 16084 / F199)).